A 691-amino-acid polypeptide reads, in one-letter code: DNA ligase (691 aa).

Residues 41-45 (DAEYD), 90-91 (SL), and E130 each bind NAD(+). The active-site N6-AMP-lysine intermediate is K132. NAD(+) contacts are provided by R153, E190, K307, and K331. Zn(2+)-binding residues include C425, C428, C443, and C449. In terms of domain architecture, BRCT spans 610-691 (APQGVLAGKT…LHQLLEGNTP (82 aa)).

Belongs to the NAD-dependent DNA ligase family. LigA subfamily. Requires Mg(2+) as cofactor. Mn(2+) serves as cofactor.

The catalysed reaction is NAD(+) + (deoxyribonucleotide)n-3'-hydroxyl + 5'-phospho-(deoxyribonucleotide)m = (deoxyribonucleotide)n+m + AMP + beta-nicotinamide D-nucleotide.. DNA ligase that catalyzes the formation of phosphodiester linkages between 5'-phosphoryl and 3'-hydroxyl groups in double-stranded DNA using NAD as a coenzyme and as the energy source for the reaction. It is essential for DNA replication and repair of damaged DNA. This Burkholderia lata (strain ATCC 17760 / DSM 23089 / LMG 22485 / NCIMB 9086 / R18194 / 383) protein is DNA ligase.